Reading from the N-terminus, the 512-residue chain is 2,3-bisphosphoglycerate-independent phosphoglycerate mutase (512 aa).

Aspartate 11 and serine 61 together coordinate Mn(2+). Serine 61 serves as the catalytic Phosphoserine intermediate. Substrate is bound by residues histidine 122, 152 to 153 (RD), arginine 184, arginine 190, 259 to 262 (RADR), and lysine 332. Mn(2+) contacts are provided by aspartate 399, histidine 403, aspartate 440, histidine 441, and histidine 459.

The protein belongs to the BPG-independent phosphoglycerate mutase family. As to quaternary structure, monomer. Requires Mn(2+) as cofactor.

It carries out the reaction (2R)-2-phosphoglycerate = (2R)-3-phosphoglycerate. The protein operates within carbohydrate degradation; glycolysis; pyruvate from D-glyceraldehyde 3-phosphate: step 3/5. Catalyzes the interconversion of 2-phosphoglycerate and 3-phosphoglycerate. This is 2,3-bisphosphoglycerate-independent phosphoglycerate mutase from Francisella tularensis subsp. novicida (strain U112).